We begin with the raw amino-acid sequence, 456 residues long: Anthranilate synthase component 1 (456 aa).

L-tryptophan is bound by residues serine 31 and 244-246; that span reads SYM. 279–280 is a chorismate binding site; sequence GT. Glutamate 306 is a Mg(2+) binding site. Residues tyrosine 394, arginine 414, 428–430, and glycine 430 each bind chorismate; that span reads GAG. Glutamate 443 is a binding site for Mg(2+).

This sequence belongs to the anthranilate synthase component I family. In terms of assembly, heterotetramer consisting of two non-identical subunits: a beta subunit (TrpG) and a large alpha subunit (TrpE). Mg(2+) serves as cofactor.

The enzyme catalyses chorismate + L-glutamine = anthranilate + pyruvate + L-glutamate + H(+). Its pathway is amino-acid biosynthesis; L-tryptophan biosynthesis; L-tryptophan from chorismate: step 1/5. Feedback inhibited by tryptophan. Functionally, part of a heterotetrameric complex that catalyzes the two-step biosynthesis of anthranilate, an intermediate in the biosynthesis of L-tryptophan. In the first step, the glutamine-binding beta subunit (TrpG) of anthranilate synthase (AS) provides the glutamine amidotransferase activity which generates ammonia as a substrate that, along with chorismate, is used in the second step, catalyzed by the large alpha subunit of AS (TrpE) to produce anthranilate. In the absence of TrpG, TrpE can synthesize anthranilate directly from chorismate and high concentrations of ammonia. The protein is Anthranilate synthase component 1 (trpE) of Lactococcus lactis subsp. lactis (strain IL1403) (Streptococcus lactis).